The chain runs to 195 residues: Small ribosomal subunit protein uS4 (195 aa).

An S4 RNA-binding domain is found at 88–150; the sequence is RRLENVVYRL…SKNVELIKLA (63 aa).

It belongs to the universal ribosomal protein uS4 family. Part of the 30S ribosomal subunit. Contacts protein S5. The interaction surface between S4 and S5 is involved in control of translational fidelity.

One of the primary rRNA binding proteins, it binds directly to 16S rRNA where it nucleates assembly of the body of the 30S subunit. Functionally, with S5 and S12 plays an important role in translational accuracy. The protein is Small ribosomal subunit protein uS4 of Fusobacterium nucleatum subsp. nucleatum (strain ATCC 25586 / DSM 15643 / BCRC 10681 / CIP 101130 / JCM 8532 / KCTC 2640 / LMG 13131 / VPI 4355).